The primary structure comprises 247 residues: ATP synthase subunit a, chloroplastic (247 aa).

The next 5 helical transmembrane spans lie at Gln38–Val58, Val95–Leu115, Ile134–Ser154, Leu199–Leu219, and Gly220–Gly240.

The protein belongs to the ATPase A chain family. F-type ATPases have 2 components, CF(1) - the catalytic core - and CF(0) - the membrane proton channel. CF(1) has five subunits: alpha(3), beta(3), gamma(1), delta(1), epsilon(1). CF(0) has four main subunits: a, b, b' and c.

It is found in the plastid. Its subcellular location is the chloroplast thylakoid membrane. Key component of the proton channel; it plays a direct role in the translocation of protons across the membrane. The protein is ATP synthase subunit a, chloroplastic of Lolium perenne (Perennial ryegrass).